The following is a 597-amino-acid chain: Arginine--tRNA ligase (597 aa).

Positions 138-148 match the 'HIGH' region motif; sequence ANPTGPMHVGH.

Belongs to the class-I aminoacyl-tRNA synthetase family. As to quaternary structure, monomer.

Its subcellular location is the cytoplasm. It catalyses the reaction tRNA(Arg) + L-arginine + ATP = L-arginyl-tRNA(Arg) + AMP + diphosphate. This Rhodopseudomonas palustris (strain HaA2) protein is Arginine--tRNA ligase.